The chain runs to 504 residues: MTRGERVIAFIERFCIVPEGKLIGQPMRLDPFQKDFILAVYDNPAGTDMAILSIARKNGKTGLIAGILLAHLVGPEAVQNTQIVSGALSREQAAIVFNLAVKMVNLNPKLQEIVHITPSGKKLIGLPCNVEYKALSAEGKTTHGLSPILAILDETGQVRGPQDDFIDAITTAQGAHENPLLIVISTQAANDADLLSIWIDDAVKSKDPHIVCHVYEAPKDADISKRESWLAANPALGTFRSEKDMARQAEKAGRMPSFENTFRNLNLNQRVSTVSPFISRSVWELCGEMPINTPRKWYAGLDLSARNDLTALVIAGEADDGVWDVFPFFWTPQKTLEERTKTDRAPYDVWVREGLLRTTPGASVDYSFVVADIAEIIGDFDLTSMAFDRWRIDQFRKDADAIGLSLPLVEFGQGFKDMGPAVDTLESLMLNGRVRHGMHPVLTMCAVNAVVVKDAAGNRKLDKSKATGRIDGMVAMTMSVGAANGEVTEQGGDFDDFIFRPLSM.

Positions 1 to 204 (MTRGERVIAF…LSIWIDDAVK (204 aa)) are ATPase activity. Residues 54–61 (IARKNGKT) carry the Walker A motif motif. Positions 149-154 (LAILDE) match the Walker B motif motif. The nuclease activity stretch occupies residues 326-415 (FPFFWTPQKT…LPLVEFGQGF (90 aa)). Residue Asp471 participates in Mg(2+) binding.

It belongs to the Hendrixvirinae large terminase family. Homopentamer; forms a ring-like structure through which genomic DNA is translocated into the capsid. Interacts with the terminase small subunit; the active complex is composed of a pentamer ring of terminase large subunits and a nonamer ring of terminase small subunits. Interacts with the portal protein; this interaction allows the packaging of viral DNA. The cofactor is Mg(2+). Requires Mn(2+) as cofactor.

Its activity is regulated as follows. Inhibited by zinc. In terms of biological role, the terminase large subunit acts as an ATP driven molecular motor necessary for viral DNA translocation into empty capsids and as an endonuclease that cuts the viral genome from the concetamer to initiate and to end a packaging reaction. The terminase lies at a unique vertex of the procapsid and is composed of two subunits, a small terminase subunit involved in viral DNA recognition (packaging sequence), and a large terminase subunit possessing endonucleolytic and ATPase activities. Both terminase subunits heterooligomerize and are docked on the portal protein to form the packaging machine. Packaging initiates by TerS recognizing the packaging sequence in the viral DNA. The nuclease activity of TerL cuts the viral DNA and the terminase-DNA complex binds to the portal of a procapsid shell. DNA is translocated into the capsid, powered by the packaging ATPase in TerL, which continues until the next site is encountered at which point the motor stops and again cuts the DNA to release the nucleocapsid filled with a unit-length genome ('unit length' packaging). This chain is Terminase, large subunit (2), found in Escherichia coli (Bacteriophage HK97).